Here is a 43-residue protein sequence, read N- to C-terminus: Protein PsbN (43 aa).

The helical transmembrane segment at 5–27 threads the bilayer; that stretch reads TLVAISISCLLVSFTGYALYTAF.

The protein belongs to the PsbN family.

Its subcellular location is the plastid. It localises to the chloroplast thylakoid membrane. Its function is as follows. May play a role in photosystem I and II biogenesis. The sequence is that of Protein PsbN from Cedrus deodara (Deodar cedar).